The chain runs to 109 residues: ATP-dependent Clp protease adapter protein ClpS (109 aa).

Residues 1–25 (MSERKEGDSGAGVRSAVITQTKPKT) are disordered.

It belongs to the ClpS family. As to quaternary structure, binds to the N-terminal domain of the chaperone ClpA.

Its function is as follows. Involved in the modulation of the specificity of the ClpAP-mediated ATP-dependent protein degradation. The polypeptide is ATP-dependent Clp protease adapter protein ClpS (Phenylobacterium zucineum (strain HLK1)).